We begin with the raw amino-acid sequence, 358 residues long: NADH-quinone oxidoreductase subunit H (358 aa).

8 helical membrane-spanning segments follow: residues 30–50 (IAVG…LIYM), 96–116 (FLYN…FACI), 129–149 (VGVF…LLAG), 168–188 (IISY…LMGT), 201–221 (GWFI…YLIA), 265–285 (FIVA…LHII), 297–317 (IPGF…LMWI), and 336–356 (YLVP…AFGF).

Belongs to the complex I subunit 1 family. NDH-1 is composed of 14 different subunits. Subunits NuoA, H, J, K, L, M, N constitute the membrane sector of the complex.

The protein resides in the cell inner membrane. It carries out the reaction a quinone + NADH + 5 H(+)(in) = a quinol + NAD(+) + 4 H(+)(out). Functionally, NDH-1 shuttles electrons from NADH, via FMN and iron-sulfur (Fe-S) centers, to quinones in the respiratory chain. The immediate electron acceptor for the enzyme in this species is believed to be ubiquinone. Couples the redox reaction to proton translocation (for every two electrons transferred, four hydrogen ions are translocated across the cytoplasmic membrane), and thus conserves the redox energy in a proton gradient. This subunit may bind ubiquinone. This Bacteroides thetaiotaomicron (strain ATCC 29148 / DSM 2079 / JCM 5827 / CCUG 10774 / NCTC 10582 / VPI-5482 / E50) protein is NADH-quinone oxidoreductase subunit H.